Here is a 443-residue protein sequence, read N- to C-terminus: Exodeoxyribonuclease 7 large subunit (443 aa).

The protein belongs to the XseA family. As to quaternary structure, heterooligomer composed of large and small subunits.

Its subcellular location is the cytoplasm. The enzyme catalyses Exonucleolytic cleavage in either 5'- to 3'- or 3'- to 5'-direction to yield nucleoside 5'-phosphates.. Its function is as follows. Bidirectionally degrades single-stranded DNA into large acid-insoluble oligonucleotides, which are then degraded further into small acid-soluble oligonucleotides. This chain is Exodeoxyribonuclease 7 large subunit, found in Legionella pneumophila (strain Lens).